Here is a 104-residue protein sequence, read N- to C-terminus: UPF0235 protein MTH_637 (104 aa).

This sequence belongs to the UPF0235 family.

This Methanothermobacter thermautotrophicus (strain ATCC 29096 / DSM 1053 / JCM 10044 / NBRC 100330 / Delta H) (Methanobacterium thermoautotrophicum) protein is UPF0235 protein MTH_637.